Consider the following 98-residue polypeptide: Thrombin-like enzyme cerastotin (98 aa).

Positions 1-98 constitute a Peptidase S1 domain; sequence VIGGAECNIN…IKKPVNGSTH (98 aa). Residues His-41 and Asp-85 each act as charge relay system in the active site. N-linked (GlcNAc...) asparagine glycosylation is present at Asn-94.

The protein belongs to the peptidase S1 family. Snake venom subfamily. In terms of assembly, monomer. Expressed by the venom gland.

Its subcellular location is the secreted. Inhibited by PMSF. Thrombin-like snake venom serine protease that preferentially cleaves the alpha-chain of fibrinogen (FGA). Induce platelet aggregation in the presence of exogenous fibrinogen. Possesses esterase and amidolytic activities. This chain is Thrombin-like enzyme cerastotin, found in Cerastes cerastes (Horned desert viper).